Consider the following 861-residue polypeptide: Actin-binding LIM protein 1 (861 aa).

4 consecutive LIM zinc-binding domains span residues 97-156 (IHCH…MYGT), 156-216 (TRCH…MSSS), 224-283 (SNCA…LFGV), and 283-343 (VKCE…TKTE). Serine 216 carries the phosphoserine modification. Positions 374 to 414 (LQLLSPPCLTNSNKNPRQPTRTSSESIYSRPGSSIPGSPGH) are disordered. Residues 381 to 400 (CLTNSNKNPRQPTRTSSESI) show a composition bias toward polar residues. Over residues 404-413 (PGSSIPGSPG) the composition is skewed to low complexity. A Phosphoserine modification is found at serine 411. Phosphotyrosine is present on residues tyrosine 417 and tyrosine 440. Disordered regions lie at residues 459-590 (EDKQ…PTYA) and 634-682 (FPAA…ELLR). A phosphoserine mark is found at serine 466, serine 470, and serine 475. A compositionally biased stretch (polar residues) spans 467-478 (LGESPRTLSPTP). At threonine 477 the chain carries Phosphothreonine. Serine 479 carries the post-translational modification Phosphoserine. A Phosphotyrosine modification is found at tyrosine 483. Residues 493–518 (RSTSQGSINSPVYSRHSYTPTTSRSP) show a composition bias toward polar residues. 3 positions are modified to phosphoserine: serine 496, serine 499, and serine 502. Over residues 536 to 546 (PLRTSSFSSTH) the composition is skewed to low complexity. Phosphoserine is present on residues serine 582 and serine 671. The stretch at 673–723 (REEDEEELLRRRQLQEEQLMKLNSGLGQLILKEEMEKESRERASLASRYDS) forms a coiled coil. A Glycyl lysine isopeptide (Lys-Gly) (interchain with G-Cter in SUMO2) cross-link involves residue lysine 704. The disordered stretch occupies residues 713 to 748 (ERASLASRYDSPLHSASHAPSSKTSSLPGYGKNGLH). Phosphoserine occurs at positions 723, 738, 760, and 789. A compositionally biased stretch (low complexity) spans 724–738 (PLHSASHAPSSKTSS). The HP domain occupies 793 to 861 (MLEPKIFPYE…NDMKKKAKLF (69 aa)).

As to quaternary structure, binds F-actin. Interacts with ABRA. As to expression, isoform 1 is detected in adult retina, where it is highly expressed in the ganglion layer. Detected in rod inner segment. Isoform 2 is highly expressed in adult retina, brain, kidney and heart. Isoform 3 is highly expressed in adult retina, brain, kidney, liver, skeletal muscle, spleen and heart. Detected in embryonic retina, brain, spinal cord, peripheral sensory ganglia and thymus.

It is found in the cytoplasm. The protein localises to the cytoskeleton. Its function is as follows. May act as scaffold protein. May play a role in the development of the retina. Has been suggested to play a role in axon guidance. The chain is Actin-binding LIM protein 1 (Ablim1) from Mus musculus (Mouse).